A 280-amino-acid chain; its full sequence is Small ribosomal subunit protein uS15m (280 aa).

Belongs to the universal ribosomal protein uS15 family. Component of the mitochondrial ribosome small subunit (28S) which comprises a 12S rRNA and about 30 distinct proteins. As to expression, expressed in anterior and posterior midgut primordia in stage 11 embryos. In stage 13 embryos, expression is high in the developing midgut and hindgut. In stage 16 embryos, expression is elevated in the midgut, hindgut, and in a small region that will give rise to pharyngeal muscles and to the stomatogastric nervous system. In larvae, expression is predominant in the gut, and head, presumably in pharyngeal muscles.

It is found in the mitochondrion. Its function is as follows. Essential for gut mitochondrial activity. Might be involved in tissue specific growth factor production. This is Small ribosomal subunit protein uS15m (bonsai) from Drosophila melanogaster (Fruit fly).